Here is a 392-residue protein sequence, read N- to C-terminus: G2/mitotic-specific cyclin-B (392 aa).

It belongs to the cyclin family. Cyclin AB subfamily.

Its function is as follows. Essential for the control of the cell cycle at the G2/M (mitosis) transition. Interacts with the CDC2 protein kinase to form MPF. G2/M cyclins accumulate steadily during G2 and are abruptly destroyed at mitosis. The sequence is that of G2/mitotic-specific cyclin-B from Hydra viridissima (Green hydra).